We begin with the raw amino-acid sequence, 532 residues long: Developmental and secondary metabolism regulator ve1 (532 aa).

The Velvet domain occupies 26–220; it reads NRSLWYQLTV…ADQGCRVRIR (195 aa). Residues 40–45 carry the Nuclear localization signal motif; the sequence is ERARAC. Residues 217-229 are compositionally biased toward basic residues; the sequence is VRIRRDVRMRKRD. Disordered stretches follow at residues 217–440 and 458–520; these read VRIR…TEPS and PQVD…RADG. Positions 233-250 are enriched in low complexity; the sequence is GGNNNNNNNAGNNAGNNG. 2 stretches are compositionally biased toward basic and acidic residues: residues 251 to 260 and 283 to 294; these read FERREEDFGR and SEHRASYSDVSR. Over residues 302–317 the composition is skewed to pro residues; it reads YPPPPPPPPSYDPTPS. The segment covering 397–411 has biased composition (low complexity); that stretch reads STSTYVPPSPSVYST. The PEST stretch occupies residues 435–463; sequence MNTEPSRGSIKISALVEPMPVIEPQVDPL. Positions 481–493 are enriched in polar residues; the sequence is FAQNTRPLFNGQR.

The protein belongs to the velvet family. VeA subfamily. Component of the heterotrimeric velvet complex composed of laeA, ve1 and velB; Ve1 acting as a bridging protein between laeA and velB. Interacts directly with laeA and velB.

The protein localises to the nucleus. It localises to the cytoplasm. Functionally, component of the velvet transcription factor complex that controls sexual/asexual developmental ratio in response to light, promoting sexual development in the darkness while stimulating asexual sporulation under illumination. The velvet complex hat acts as a global regulator for secondary metabolite gene expression. Controls the expression of the aurofusarin and trichothecene gene clusters. Also controls the expression of the deoxynivalenol (DON) gene cluster. Regulates hyphal growth and pigment formation. Acts as a positive regulator of virulence. The chain is Developmental and secondary metabolism regulator ve1 from Gibberella zeae (strain ATCC MYA-4620 / CBS 123657 / FGSC 9075 / NRRL 31084 / PH-1) (Wheat head blight fungus).